Consider the following 93-residue polypeptide: UPF0367 protein gsr3177 (93 aa).

It belongs to the UPF0367 family.

The chain is UPF0367 protein gsr3177 from Gloeobacter violaceus (strain ATCC 29082 / PCC 7421).